We begin with the raw amino-acid sequence, 185 residues long: Elongation factor P (185 aa).

It belongs to the elongation factor P family.

It localises to the cytoplasm. The protein operates within protein biosynthesis; polypeptide chain elongation. Its function is as follows. Involved in peptide bond synthesis. Stimulates efficient translation and peptide-bond synthesis on native or reconstituted 70S ribosomes in vitro. Probably functions indirectly by altering the affinity of the ribosome for aminoacyl-tRNA, thus increasing their reactivity as acceptors for peptidyl transferase. The polypeptide is Elongation factor P (Thermosipho africanus (strain TCF52B)).